The chain runs to 136 residues: Gonadotropin subunit beta-2 (136 aa).

An N-terminal signal peptide occupies residues 1–21 (MVCLFLGASSFIWSLAPAAAA). Cystine bridges form between cysteine 27-cysteine 75, cysteine 41-cysteine 90, cysteine 44-cysteine 128, cysteine 52-cysteine 106, cysteine 56-cysteine 108, and cysteine 111-cysteine 118. N-linked (GlcNAc...) asparagine glycosylation occurs at asparagine 31.

The protein belongs to the glycoprotein hormones subunit beta family. Heterodimer of an alpha and a beta chain.

The protein resides in the secreted. In terms of biological role, involved in gametogenesis and steroidogenesis. This Fundulus heteroclitus (Killifish) protein is Gonadotropin subunit beta-2 (cgbb).